The chain runs to 129 residues: Protein RfbJ (129 aa).

Belongs to the glycosyltransferase 2 family.

It participates in bacterial outer membrane biogenesis; lipopolysaccharide biosynthesis. The protein is Protein RfbJ (rfbJ) of Shigella flexneri.